A 572-amino-acid polypeptide reads, in one-letter code: Neuronal acetylcholine receptor subunit alpha-9-I (572 aa).

A signal peptide spans 1–19 (MKTVVLLTWISCWIDVCTS). Over 20–232 (AQGRYAQKLL…YTLHLKRRSL (213 aa)) the chain is Extracellular. Asn-51 carries N-linked (GlcNAc...) asparagine glycosylation. Cys-149 and Cys-163 are joined by a disulfide. The N-linked (GlcNAc...) asparagine glycan is linked to Asn-164. A disulfide bond links Cys-213 and Cys-214. 3 consecutive transmembrane segments (helical) span residues 233–253 (FYIFNLLLPCFLISFLAPLGF), 263–283 (VSLGVTVLLALTVFQLMVAES), and 297–317 (YIATMTMITASTSLTIFIMNI). At 318 to 550 (HFCGAEAKPV…WKKVAKVMDR (233 aa)) the chain is on the cytoplasmic side. Residues 405–458 (GHLQNHHSTHQNHLDNCRYANGGHRDDHYSNRSNQNHHSNRSQTSKGEGGEEKR) are disordered. Low complexity predominate over residues 435 to 447 (NRSNQNHHSNRSQ). Residues 551–571 (FFMWIFFIMVFLMSILIIGKA) form a helical membrane-spanning segment.

It belongs to the ligand-gated ion channel (TC 1.A.9) family. Acetylcholine receptor (TC 1.A.9.1) subfamily. As to expression, expressed in the liver, olfactory mucosa, pituitary gland, hair cells of the saccule and spleen.

The protein resides in the postsynaptic cell membrane. The protein localises to the cell membrane. This Oncorhynchus mykiss (Rainbow trout) protein is Neuronal acetylcholine receptor subunit alpha-9-I (nachra9).